Here is a 328-residue protein sequence, read N- to C-terminus: Complex I intermediate-associated protein 30, mitochondrial (328 aa).

The N-terminal 24 residues, 1 to 24 (MSSIHKLLTGIYIHKNFLRPRAAL), are a transit peptide targeting the mitochondrion. Polar residues predominate over residues 44–54 (VTSVDRASQQG). The disordered stretch occupies residues 44-80 (VTSVDRASQQGKTEEGLQGHDHKEVALDAPSPDRTPE). Residues 55–69 (KTEEGLQGHDHKEVA) show a composition bias toward basic and acidic residues. Ser-319 carries the post-translational modification Phosphoserine.

It belongs to the CIA30 family. As to quaternary structure, part of the mitochondrial complex I assembly/MCIA complex that comprises at least the core subunits TMEM126B, NDUFAF1, ECSIT and ACAD9 and complement subunits such as COA1 and TMEM186. Interacts with ECSIT. Interacts with ACAD9. At early stages of complex I assembly, it is found in intermediate subcomplexes that contain different subunits including NDUFB6, NDUFA6, NDUFA9, NDUFS3, NDUFS7, ND1, ND2 and ND3. Interacts with TMEM70 and TMEM242.

The protein resides in the mitochondrion. It localises to the mitochondrion matrix. In terms of biological role, as part of the MCIA complex, involved in the assembly of the mitochondrial complex I. This Mus musculus (Mouse) protein is Complex I intermediate-associated protein 30, mitochondrial.